We begin with the raw amino-acid sequence, 126 residues long: S-adenosylmethionine decarboxylase proenzyme (126 aa).

The active-site Schiff-base intermediate with substrate; via pyruvic acid is the Ser-63. Ser-63 carries the pyruvic acid (Ser); by autocatalysis modification. The active-site Proton acceptor; for processing activity is His-68. Cys-83 (proton donor; for catalytic activity) is an active-site residue.

This sequence belongs to the prokaryotic AdoMetDC family. Type 1 subfamily. In terms of assembly, heterotetramer of two alpha and two beta chains arranged as a dimer of alpha/beta heterodimers. It depends on pyruvate as a cofactor. Is synthesized initially as an inactive proenzyme. Formation of the active enzyme involves a self-maturation process in which the active site pyruvoyl group is generated from an internal serine residue via an autocatalytic post-translational modification. Two non-identical subunits are generated from the proenzyme in this reaction, and the pyruvate is formed at the N-terminus of the alpha chain, which is derived from the carboxyl end of the proenzyme. The post-translation cleavage follows an unusual pathway, termed non-hydrolytic serinolysis, in which the side chain hydroxyl group of the serine supplies its oxygen atom to form the C-terminus of the beta chain, while the remainder of the serine residue undergoes an oxidative deamination to produce ammonia and the pyruvoyl group blocking the N-terminus of the alpha chain.

The catalysed reaction is S-adenosyl-L-methionine + H(+) = S-adenosyl 3-(methylsulfanyl)propylamine + CO2. It functions in the pathway amine and polyamine biosynthesis; S-adenosylmethioninamine biosynthesis; S-adenosylmethioninamine from S-adenosyl-L-methionine: step 1/1. Its function is as follows. Catalyzes the decarboxylation of S-adenosylmethionine to S-adenosylmethioninamine (dcAdoMet), the propylamine donor required for the synthesis of the polyamines spermine and spermidine from the diamine putrescine. This Syntrophomonas wolfei subsp. wolfei (strain DSM 2245B / Goettingen) protein is S-adenosylmethionine decarboxylase proenzyme.